A 122-amino-acid polypeptide reads, in one-letter code: Large ribosomal subunit protein uL24 (122 aa).

The protein belongs to the universal ribosomal protein uL24 family. In terms of assembly, part of the 50S ribosomal subunit.

In terms of biological role, one of two assembly initiator proteins, it binds directly to the 5'-end of the 23S rRNA, where it nucleates assembly of the 50S subunit. Its function is as follows. One of the proteins that surrounds the polypeptide exit tunnel on the outside of the subunit. This is Large ribosomal subunit protein uL24 from Trichodesmium erythraeum (strain IMS101).